A 340-amino-acid polypeptide reads, in one-letter code: UPF0324 membrane protein BC_5174 (340 aa).

10 helical membrane-spanning segments follow: residues 13–35 (FGFSQGIGITLLIAIAAKYLAEL), 40–59 (IMGQLVIAILIGMVWRAAIG), 99–118 (VLVIAAVVITFTIFVVYGLT), 128–150 (GILTACGTAICGAAAVVAIAPQV), 157–179 (TAVGAAIIAILGTIFTLIYTLLY), 189–211 (YGVFSGATLHEIAHVIAAAAPGG), 218–240 (AVIVKLTRVAMLVPVAILIGLWF), 255–277 (LPIPWFIFGFLAMSAVHSLGIIP), 279–301 (VVAGYIVVLAYMLIAMAMAGLGL), and 316–338 (FVAGLIGSVCLSVLGYVLVYALG).

It belongs to the UPF0324 family.

The protein localises to the cell membrane. This chain is UPF0324 membrane protein BC_5174, found in Bacillus cereus (strain ATCC 14579 / DSM 31 / CCUG 7414 / JCM 2152 / NBRC 15305 / NCIMB 9373 / NCTC 2599 / NRRL B-3711).